A 206-amino-acid polypeptide reads, in one-letter code: Large ribosomal subunit protein uL4 (206 aa).

A disordered region spans residues 49–76; sequence QSAKTRTEVRGGGIKPWRQKGTGRARQG.

The protein belongs to the universal ribosomal protein uL4 family. As to quaternary structure, part of the 50S ribosomal subunit.

Its function is as follows. One of the primary rRNA binding proteins, this protein initially binds near the 5'-end of the 23S rRNA. It is important during the early stages of 50S assembly. It makes multiple contacts with different domains of the 23S rRNA in the assembled 50S subunit and ribosome. Forms part of the polypeptide exit tunnel. In Clostridium botulinum (strain Alaska E43 / Type E3), this protein is Large ribosomal subunit protein uL4.